The chain runs to 459 residues: Sorting nexin-8 (459 aa).

The interval 1 to 53 (MTGGAMDPLPTAPGAAAAEAEVDEEADPPAADSPVPPVSEPRAPDAGQMQVPP) is disordered. In terms of domain architecture, PX spans 68-176 (ARDAVQVELV…KLFLSFSGPD (109 aa)). A 1,2-diacyl-sn-glycero-3-phospho-(1D-myo-inositol-3-phosphate) is bound by residues Arg104, Lys130, and Arg143.

It belongs to the sorting nexin family.

The protein resides in the early endosome membrane. Functionally, may be involved in several stages of intracellular trafficking. May play a role in intracellular protein transport from early endosomes to the trans-Golgi network. In Bos taurus (Bovine), this protein is Sorting nexin-8 (SNX8).